A 164-amino-acid polypeptide reads, in one-letter code: Crossover junction endodeoxyribonuclease RuvC (164 aa).

Catalysis depends on residues Asp7, Glu67, and Asp139. Mg(2+) contacts are provided by Asp7, Glu67, and Asp139.

This sequence belongs to the RuvC family. Homodimer which binds Holliday junction (HJ) DNA. The HJ becomes 2-fold symmetrical on binding to RuvC with unstacked arms; it has a different conformation from HJ DNA in complex with RuvA. In the full resolvosome a probable DNA-RuvA(4)-RuvB(12)-RuvC(2) complex forms which resolves the HJ. The cofactor is Mg(2+).

It is found in the cytoplasm. The enzyme catalyses Endonucleolytic cleavage at a junction such as a reciprocal single-stranded crossover between two homologous DNA duplexes (Holliday junction).. Functionally, the RuvA-RuvB-RuvC complex processes Holliday junction (HJ) DNA during genetic recombination and DNA repair. Endonuclease that resolves HJ intermediates. Cleaves cruciform DNA by making single-stranded nicks across the HJ at symmetrical positions within the homologous arms, yielding a 5'-phosphate and a 3'-hydroxyl group; requires a central core of homology in the junction. The consensus cleavage sequence is 5'-(A/T)TT(C/G)-3'. Cleavage occurs on the 3'-side of the TT dinucleotide at the point of strand exchange. HJ branch migration catalyzed by RuvA-RuvB allows RuvC to scan DNA until it finds its consensus sequence, where it cleaves and resolves the cruciform DNA. The polypeptide is Crossover junction endodeoxyribonuclease RuvC (Geobacter sp. (strain M21)).